Reading from the N-terminus, the 438-residue chain is tRNA-dihydrouridine(16/17) synthase [NAD(P)(+)]-like (438 aa).

Residues 23 to 25 (PMV) and Gln79 contribute to the FMN site. Cys108 (proton donor) is an active-site residue. Residues Lys147, His175, 208–210 (NGN), and 232–233 (AE) contribute to the FMN site. The tract at residues 343-387 (GPKEGSKENSSGRSKRALEEEEGSMEGLSKNKLKKQLRNPHKTFD) is disordered. The span at 373-383 (NKLKKQLRNPH) shows a compositional bias: basic residues.

It belongs to the Dus family. Dus1 subfamily. Requires FMN as cofactor.

The protein resides in the cytoplasm. Its subcellular location is the nucleus. It carries out the reaction 5,6-dihydrouridine(16) in tRNA + NADP(+) = uridine(16) in tRNA + NADPH + H(+). The catalysed reaction is 5,6-dihydrouridine(16) in tRNA + NAD(+) = uridine(16) in tRNA + NADH + H(+). It catalyses the reaction 5,6-dihydrouridine(17) in tRNA + NAD(+) = uridine(17) in tRNA + NADH + H(+). The enzyme catalyses 5,6-dihydrouridine(17) in tRNA + NADP(+) = uridine(17) in tRNA + NADPH + H(+). Catalyzes the synthesis of dihydrouridine, a modified base found in the D-loop of most tRNAs. Specifically modifies U16 and U17 in cytoplasmic tRNAs. Affects the level of some mature tRNA and thereby the total cellular translation. In Rattus norvegicus (Rat), this protein is tRNA-dihydrouridine(16/17) synthase [NAD(P)(+)]-like (Dus1l).